A 123-amino-acid chain; its full sequence is Small ribosomal subunit protein uS12cz/uS12cy (123 aa).

It belongs to the universal ribosomal protein uS12 family. Part of the 30S ribosomal subunit.

The protein localises to the plastid. Its subcellular location is the chloroplast. Its function is as follows. With S4 and S5 plays an important role in translational accuracy. Located at the interface of the 30S and 50S subunits. The protein is Small ribosomal subunit protein uS12cz/uS12cy (rps12-A) of Populus alba (White poplar).